We begin with the raw amino-acid sequence, 213 residues long: Pyrrolidone-carboxylate peptidase (213 aa).

Catalysis depends on residues E78, C141, and H165.

Belongs to the peptidase C15 family. Homotetramer.

It is found in the cytoplasm. It carries out the reaction Release of an N-terminal pyroglutamyl group from a polypeptide, the second amino acid generally not being Pro.. Functionally, removes 5-oxoproline from various penultimate amino acid residues except L-proline. This is Pyrrolidone-carboxylate peptidase from Staphylococcus saprophyticus subsp. saprophyticus (strain ATCC 15305 / DSM 20229 / NCIMB 8711 / NCTC 7292 / S-41).